The chain runs to 209 residues: Large ribosomal subunit protein uL3 (209 aa).

Positions 133–152 (THGNSLSHRVPGSIGQNQTP) are disordered. Gln150 carries the N5-methylglutamine modification.

It belongs to the universal ribosomal protein uL3 family. Part of the 50S ribosomal subunit. Forms a cluster with proteins L14 and L19. Methylated by PrmB.

One of the primary rRNA binding proteins, it binds directly near the 3'-end of the 23S rRNA, where it nucleates assembly of the 50S subunit. The polypeptide is Large ribosomal subunit protein uL3 (Sodalis glossinidius (strain morsitans)).